Reading from the N-terminus, the 69-residue chain is Large ribosomal subunit protein bL28 (69 aa).

Belongs to the bacterial ribosomal protein bL28 family.

The chain is Large ribosomal subunit protein bL28 from Desulfovibrio desulfuricans (strain ATCC 27774 / DSM 6949 / MB).